Reading from the N-terminus, the 344-residue chain is GTPase Obg (344 aa).

The region spanning 1–159 (MKFLDEAKVY…MWLILRLKLI (159 aa)) is the Obg domain. An OBG-type G domain is found at 160–327 (ADAGLVGLPN…ALRAIQAQLD (168 aa)). GTP is bound by residues 166-173 (GLPNAGKS), 191-195 (FTTLH), 212-215 (DIPG), 279-282 (SKAD), and 308-310 (SAA). Positions 173 and 193 each coordinate Mg(2+).

The protein belongs to the TRAFAC class OBG-HflX-like GTPase superfamily. OBG GTPase family. Monomer. Mg(2+) serves as cofactor.

It is found in the cytoplasm. An essential GTPase which binds GTP, GDP and possibly (p)ppGpp with moderate affinity, with high nucleotide exchange rates and a fairly low GTP hydrolysis rate. Plays a role in control of the cell cycle, stress response, ribosome biogenesis and in those bacteria that undergo differentiation, in morphogenesis control. This is GTPase Obg from Methylorubrum extorquens (strain CM4 / NCIMB 13688) (Methylobacterium extorquens).